Reading from the N-terminus, the 75-residue chain is Protein RegB (75 aa).

In terms of biological role, required for optimal exotoxin A production. The chain is Protein RegB (regB) from Pseudomonas aeruginosa (strain ATCC 15692 / DSM 22644 / CIP 104116 / JCM 14847 / LMG 12228 / 1C / PRS 101 / PAO1).